The chain runs to 398 residues: Ornithine aminotransferase (398 aa).

Lys256 is modified (N6-(pyridoxal phosphate)lysine).

The protein belongs to the class-III pyridoxal-phosphate-dependent aminotransferase family. OAT subfamily. Requires pyridoxal 5'-phosphate as cofactor.

The protein localises to the cytoplasm. It carries out the reaction a 2-oxocarboxylate + L-ornithine = L-glutamate 5-semialdehyde + an L-alpha-amino acid. It participates in amino-acid biosynthesis; L-proline biosynthesis; L-glutamate 5-semialdehyde from L-ornithine: step 1/1. Catalyzes the interconversion of ornithine to glutamate semialdehyde. This chain is Ornithine aminotransferase, found in Halalkalibacterium halodurans (strain ATCC BAA-125 / DSM 18197 / FERM 7344 / JCM 9153 / C-125) (Bacillus halodurans).